A 336-amino-acid polypeptide reads, in one-letter code: Speedy protein E1 (336 aa).

Positions 16–50 are disordered; that stretch reads GVDPSPPCRSLGWKRKREWSDESEEEPEKELAPEP. The segment covering 36–50 has biased composition (acidic residues); sequence DESEEEPEKELAPEP.

The protein belongs to the Speedy/Ringo family. In terms of tissue distribution, predominantly expressed in testis and heart.

This Homo sapiens (Human) protein is Speedy protein E1.